Here is a 196-residue protein sequence, read N- to C-terminus: Protein kinase OspG (196 aa).

It belongs to the protein kinase superfamily. Autophosphorylated.

It is found in the secreted. Its subcellular location is the host cell. Effector proteins function to alter host cell physiology and promote bacterial survival in host tissues. This protein is a kinase that is involved in down-regulation of the host innate response induced by invasive bacteria. In Shigella flexneri serotype X (strain 2002017), this protein is Protein kinase OspG (ospG).